The following is a 126-amino-acid chain: Large ribosomal subunit protein eL32 (126 aa).

This sequence belongs to the eukaryotic ribosomal protein eL32 family.

The protein is Large ribosomal subunit protein eL32 of Thermococcus onnurineus (strain NA1).